The sequence spans 247 residues: Cell division protein ZapD (247 aa).

This sequence belongs to the ZapD family. Interacts with FtsZ.

It localises to the cytoplasm. Cell division factor that enhances FtsZ-ring assembly. Directly interacts with FtsZ and promotes bundling of FtsZ protofilaments, with a reduction in FtsZ GTPase activity. This is Cell division protein ZapD from Escherichia fergusonii (strain ATCC 35469 / DSM 13698 / CCUG 18766 / IAM 14443 / JCM 21226 / LMG 7866 / NBRC 102419 / NCTC 12128 / CDC 0568-73).